We begin with the raw amino-acid sequence, 567 residues long: Potassium-transporting ATPase potassium-binding subunit (567 aa).

A run of 12 helical transmembrane segments spans residues 3 to 23 (MIGW…TKPL), 64 to 84 (LTYT…IYGV), 136 to 156 (GLTH…MALI), 179 to 199 (LYVL…QGIP), 220 to 240 (VGPV…GGFF), 254 to 274 (LSNF…TNVF), 285 to 305 (WAIL…TYWA), 330 to 350 (FGLV…CGAV), 374 to 394 (IIVG…VLAI), 420 to 440 (AMLA…VGVV), 488 to 508 (LASA…AIAG), and 527 to 547 (GGLF…LTFF).

Belongs to the KdpA family. As to quaternary structure, the system is composed of three essential subunits: KdpA, KdpB and KdpC.

Its subcellular location is the cell inner membrane. Functionally, part of the high-affinity ATP-driven potassium transport (or Kdp) system, which catalyzes the hydrolysis of ATP coupled with the electrogenic transport of potassium into the cytoplasm. This subunit binds the periplasmic potassium ions and delivers the ions to the membrane domain of KdpB through an intramembrane tunnel. The protein is Potassium-transporting ATPase potassium-binding subunit of Bradyrhizobium diazoefficiens (strain JCM 10833 / BCRC 13528 / IAM 13628 / NBRC 14792 / USDA 110).